The sequence spans 81 residues: X antigen family member 1 (81 aa).

K12 participates in a covalent cross-link: Glycyl lysine isopeptide (Lys-Gly) (interchain with G-Cter in SUMO2). Residue S20 is modified to Phosphoserine. Residues K61 and K65 each participate in a glycyl lysine isopeptide (Lys-Gly) (interchain with G-Cter in SUMO2) cross-link.

It belongs to the GAGE family. In normal tissues, highly expressed in testis. Expressed also in many different types of cancers: highly expressed in breast cancer, prostate cancer and many types of lung cancers, including squamous cell carcinoma, small cell carcinoma, non-small cell carcinoma, and adenocarcinoma, as well as in Ewing's cell lines, in some Ewing's sarcoma patient samples, and in one of one alveolar rhabdomyosarcoma patient sample.

The polypeptide is X antigen family member 1 (Homo sapiens (Human)).